The sequence spans 151 residues: Ribosome maturation factor RimP (151 aa).

Belongs to the RimP family.

Its subcellular location is the cytoplasm. In terms of biological role, required for maturation of 30S ribosomal subunits. The chain is Ribosome maturation factor RimP from Vibrio atlanticus (strain LGP32) (Vibrio splendidus (strain Mel32)).